A 164-amino-acid chain; its full sequence is I-Kappa-B like protein F1 (164 aa).

ANK repeat units lie at residues 57–89, 94–124, and 128–157; these read HGRQ…NINA, TGNT…DLGA, and QQET…AYNN.

This sequence belongs to the polydnaviridae I-Kappa-B-like protein family.

In terms of biological role, suppresses the host immune response through NF-kappa-B inactivation. Possesses ankyrin repeat domains required for NF-kappa-B binding but lacks the regulatory regions required for dissociation from NF-kappa-B and degradation. Therefore, prevents host NF-kappa-B release and subsequent activation. In Microplitis demolitor bracovirus (isolate Webb) (MdBV), this protein is I-Kappa-B like protein F1 (F2).